The following is a 296-amino-acid chain: tRNA dimethylallyltransferase (296 aa).

11–18 provides a ligand contact to ATP; it reads GPTAVGKT. 13–18 is a binding site for substrate; it reads TAVGKT. The tract at residues 36 to 39 is interaction with substrate tRNA; that stretch reads DSQQ.

Belongs to the IPP transferase family. Monomer. Requires Mg(2+) as cofactor.

It carries out the reaction adenosine(37) in tRNA + dimethylallyl diphosphate = N(6)-dimethylallyladenosine(37) in tRNA + diphosphate. Catalyzes the transfer of a dimethylallyl group onto the adenine at position 37 in tRNAs that read codons beginning with uridine, leading to the formation of N6-(dimethylallyl)adenosine (i(6)A). This is tRNA dimethylallyltransferase from Streptococcus equi subsp. equi (strain 4047).